A 300-amino-acid chain; its full sequence is Ecto-ADP-ribosyltransferase 4 (300 aa).

Positions 1 to 23 are cleaved as a signal peptide; the sequence is MALWLPGGQLTLLLLLWVQQTPA. Residues 24–269 are Extracellular-facing; the sequence is GSTEAPLKVD…QLLKACSKKC (246 aa). 2 disulfide bridges follow: C48–C259 and C161–C210. In terms of domain architecture, TR mART core spans 70–255; it reads KYYSRAWQKA…INLRSAGNMS (186 aa). N-linked (GlcNAc...) asparagine glycans are attached at residues N110 and N157. Q185 contributes to the NAD(+) binding site. N-linked (GlcNAc...) asparagine glycosylation occurs at N201. Position 219 (S219) interacts with NAD(+). Residue N253 is glycosylated (N-linked (GlcNAc...) asparagine). Residue A264 is the site of GPI-anchor amidated alanine attachment. A propeptide spans 265-300 (removed in mature form); it reads CSKKCAPAPVVIGCLFLVTVVISSKSRAQRNLLAPF. A helical membrane pass occupies residues 270–286; sequence APAPVVIGCLFLVTVVI. Residues 287–300 lie on the Cytoplasmic side of the membrane; the sequence is SSKSRAQRNLLAPF.

This sequence belongs to the Arg-specific ADP-ribosyltransferase family.

The protein resides in the membrane. The protein localises to the cell membrane. The catalysed reaction is L-arginyl-[protein] + NAD(+) = N(omega)-(ADP-D-ribosyl)-L-arginyl-[protein] + nicotinamide + H(+). The chain is Ecto-ADP-ribosyltransferase 4 (Art4) from Mus musculus (Mouse).